A 340-amino-acid polypeptide reads, in one-letter code: Ketol-acid reductoisomerase (NADP(+)) (340 aa).

The region spanning 1–183 is the KARI N-terminal Rossmann domain; it reads MAITVYYDKD…GGGRTGIIET (183 aa). Residues 26–29, Ser-54, and 84–87 each bind NADP(+); these read FGSQ and DEFQ. The active site involves His-109. Gly-135 lines the NADP(+) pocket. Residues 184-329 enclose the KARI C-terminal knotted domain; sequence TFKAETETDL…EKLRGMMPWI (146 aa). Mg(2+)-binding residues include Asp-192, Glu-196, Glu-228, and Glu-232. Ser-253 contributes to the substrate binding site.

This sequence belongs to the ketol-acid reductoisomerase family. The cofactor is Mg(2+).

The enzyme catalyses (2R)-2,3-dihydroxy-3-methylbutanoate + NADP(+) = (2S)-2-acetolactate + NADPH + H(+). The catalysed reaction is (2R,3R)-2,3-dihydroxy-3-methylpentanoate + NADP(+) = (S)-2-ethyl-2-hydroxy-3-oxobutanoate + NADPH + H(+). Its pathway is amino-acid biosynthesis; L-isoleucine biosynthesis; L-isoleucine from 2-oxobutanoate: step 2/4. It functions in the pathway amino-acid biosynthesis; L-valine biosynthesis; L-valine from pyruvate: step 2/4. Involved in the biosynthesis of branched-chain amino acids (BCAA). Catalyzes an alkyl-migration followed by a ketol-acid reduction of (S)-2-acetolactate (S2AL) to yield (R)-2,3-dihydroxy-isovalerate. In the isomerase reaction, S2AL is rearranged via a Mg-dependent methyl migration to produce 3-hydroxy-3-methyl-2-ketobutyrate (HMKB). In the reductase reaction, this 2-ketoacid undergoes a metal-dependent reduction by NADPH to yield (R)-2,3-dihydroxy-isovalerate. This chain is Ketol-acid reductoisomerase (NADP(+)), found in Campylobacter fetus subsp. fetus (strain 82-40).